A 242-amino-acid chain; its full sequence is Zinc-finger homeodomain protein 13 (242 aa).

The segment at 64–111 adopts a ZF-HD dimerization-type; degenerate zinc-finger fold; it reads YYECRKNHAADIGTTAYDGCGEFVSSTGEEDSLNCAACGCHRNFHREE. The tract at residues 144 to 166 is disordered; that stretch reads GGKSEGKKKKKEKESYGGDPIIK. Positions 155–166 are enriched in basic and acidic residues; that stretch reads EKESYGGDPIIK. A DNA-binding region (homeobox) is located at residues 179 to 238; it reads VKRLKTKFTAEQTEKMRDYAEKLRWKVRPERQEEVEEFCVEIGVNRKNFRIWMNNHKDKI.

Homo- and heterodimer with other ZFHD proteins. Interacts with MIF1, MIF2 and MIF3; these interactions prevent nuclear localization and DNA-binding to inhibit transcription regulation activity. Binds to ZHD11. As to expression, mostly expressed in flowers.

It localises to the nucleus. In terms of biological role, putative transcription factor. The polypeptide is Zinc-finger homeodomain protein 13 (ZHD13) (Arabidopsis thaliana (Mouse-ear cress)).